Here is a 550-residue protein sequence, read N- to C-terminus: Methionine--tRNA ligase (550 aa).

A 'HIGH' region motif is present at residues 10-22; that stretch reads LPYPNNSSPHLGN. Residues 336–340 carry the 'KMSKS' region motif; that stretch reads KFSKS. Residue Lys339 coordinates ATP.

Belongs to the class-I aminoacyl-tRNA synthetase family.

The catalysed reaction is tRNA(Met) + L-methionine + ATP = L-methionyl-tRNA(Met) + AMP + diphosphate. The protein is Methionine--tRNA ligase (MARS) of Acanthamoeba polyphaga mimivirus (APMV).